The chain runs to 260 residues: tRNA pseudouridine synthase A (260 aa).

Residue Asp52 is the Nucleophile of the active site. Residue Tyr110 coordinates substrate.

Belongs to the tRNA pseudouridine synthase TruA family. In terms of assembly, homodimer.

It catalyses the reaction uridine(38/39/40) in tRNA = pseudouridine(38/39/40) in tRNA. Its function is as follows. Formation of pseudouridine at positions 38, 39 and 40 in the anticodon stem and loop of transfer RNAs. The protein is tRNA pseudouridine synthase A of Thiobacillus denitrificans (strain ATCC 25259 / T1).